A 271-amino-acid polypeptide reads, in one-letter code: Signal recognition particle receptor subunit beta (271 aa).

A helical transmembrane segment spans residues 37–57 (LLSVVVAVLAVLLTLVFWKLI). GTP-binding positions include 71-79 (GLCDSGKTL) and 92-95 (TQTS). Serine 112 is subject to Phosphoserine. Residue glycine 120 coordinates GTP. Threonine 214 is modified (phosphothreonine). Position 248 (alanine 248) interacts with GTP.

This sequence belongs to the SRP receptor beta subunit family. In terms of assembly, heterodimer with SRPRA.

It localises to the endoplasmic reticulum membrane. In terms of biological role, component of the signal recognition particle (SRP) complex receptor (SR). Ensures, in conjunction with the SRP complex, the correct targeting of the nascent secretory proteins to the endoplasmic reticulum membrane system. May mediate the membrane association of SR. The chain is Signal recognition particle receptor subunit beta (SRPRB) from Homo sapiens (Human).